The following is an 80-amino-acid chain: Exodeoxyribonuclease 7 small subunit (80 aa).

This sequence belongs to the XseB family. Heterooligomer composed of large and small subunits.

It is found in the cytoplasm. The catalysed reaction is Exonucleolytic cleavage in either 5'- to 3'- or 3'- to 5'-direction to yield nucleoside 5'-phosphates.. Functionally, bidirectionally degrades single-stranded DNA into large acid-insoluble oligonucleotides, which are then degraded further into small acid-soluble oligonucleotides. The protein is Exodeoxyribonuclease 7 small subunit of Aliivibrio salmonicida (strain LFI1238) (Vibrio salmonicida (strain LFI1238)).